Here is a 109-residue protein sequence, read N- to C-terminus: MLEPFQILSICSFILSALHFMAWTIGHLNQIKRGVNLKIRIRNPNKETINREVSILRHSYQKEIQAKETMKEVLSDNMEILSDHIVIEGLSAEEIIKMGETVLEVEELH.

Residues 1 to 4 are Virion surface-facing; it reads MLEP. A helical; Signal-anchor for type III membrane protein transmembrane segment spans residues 5 to 27; the sequence is FQILSICSFILSALHFMAWTIGH. The Intravirion portion of the chain corresponds to 28–109; that stretch reads LNQIKRGVNL…ETVLEVEELH (82 aa).

In terms of assembly, homotetramer. Phosphorylated by host.

The protein localises to the virion membrane. Its subcellular location is the host cell membrane. In terms of biological role, forms presumably a highly low-pH gated proton-selective channel. Trp-23 may function as a minimalistic gate that opens and closes the pore. When the environmental pH is lower than a threshold, the BM2 channel would be activated and selectively transport protons across the membrane from the extracellular side to the cytoplasmic side. Crucial for the uncoating process. When the virion is internalized into the endosome, the channel acidifies the virion's interior, promoting the dissociation of matrix protein 1 (M1) from the ribonucleoprotein (RNP) thus allowing the transport of the RNP from the virion into the cell's nucleus. Also plays a role in viral protein secretory pathway. Elevates the intravesicular pH of normally acidic compartments, such as trans-Golgi network, preventing newly formed hemagglutinin from premature switching to the fusion-active conformation. Plays a crucial role in virion assembly. Expressed in the late phase of the infection. In Homo sapiens (Human), this protein is Matrix protein 2 (M).